The primary structure comprises 270 residues: MMNRIHAVILDWAGTTVDFGSFAPTQIFVEAFRQAFDVEITLAEARVPMGLGKWQHIEALGKLPAVDARWQAKFGRSMSAADIDAIYAAFMPLQIAKVVDFSSPIAGVIDTIAALRAEGIKIGSCSGYPRAVMERLVPAAAEHGYRPDHWVATDDLAAGGRPGPWMALQNVIALGIDAVAHCVKVDDAALGISEGLNAGMWTVGLAVSGNEFGATWDAYQTMSKEDVAVRREHAASKLYAAGAHYVVDSLADLSGVIAHINARLAQGERP.

Residue Asp11 is the Nucleophile of the active site. The Mg(2+) site is built by Asp11 and Ala13. Lys53 acts as the Schiff-base intermediate with substrate in catalysis. Position 187 (Asp187) interacts with Mg(2+).

The protein belongs to the HAD-like hydrolase superfamily. PhnX family. Homodimer. Mg(2+) serves as cofactor.

The enzyme catalyses phosphonoacetaldehyde + H2O = acetaldehyde + phosphate + H(+). Functionally, involved in phosphonate degradation. This chain is Phosphonoacetaldehyde hydrolase, found in Salmonella gallinarum (strain 287/91 / NCTC 13346).